The following is an 86-amino-acid chain: Exodeoxyribonuclease 7 small subunit (86 aa).

Residues 67 to 86 (RVSPASGGATEAPAPAERDR) form a disordered region.

The protein belongs to the XseB family. As to quaternary structure, heterooligomer composed of large and small subunits.

The protein localises to the cytoplasm. The catalysed reaction is Exonucleolytic cleavage in either 5'- to 3'- or 3'- to 5'-direction to yield nucleoside 5'-phosphates.. Bidirectionally degrades single-stranded DNA into large acid-insoluble oligonucleotides, which are then degraded further into small acid-soluble oligonucleotides. The sequence is that of Exodeoxyribonuclease 7 small subunit from Beutenbergia cavernae (strain ATCC BAA-8 / DSM 12333 / CCUG 43141 / JCM 11478 / NBRC 16432 / NCIMB 13614 / HKI 0122).